The sequence spans 185 residues: ADP-ribosylation factor (185 aa).

Residue Gly-2 is the site of N-myristoyl glycine attachment. Residues 27–34 (GLDAAGKT), 70–74 (DVGGQ), and 129–132 (NKQD) each bind GTP.

It belongs to the small GTPase superfamily. Arf family.

It is found in the golgi apparatus. Functionally, GTP-binding protein involved in protein trafficking; may modulate vesicle budding and uncoating within the Golgi apparatus. The polypeptide is ADP-ribosylation factor (Neurospora crassa (strain ATCC 24698 / 74-OR23-1A / CBS 708.71 / DSM 1257 / FGSC 987)).